Consider the following 103-residue polypeptide: Small ribosomal subunit protein uS10 (103 aa).

The protein belongs to the universal ribosomal protein uS10 family. Part of the 30S ribosomal subunit.

Its function is as follows. Involved in the binding of tRNA to the ribosomes. This Wigglesworthia glossinidia brevipalpis protein is Small ribosomal subunit protein uS10.